The chain runs to 490 residues: Trigger factor (490 aa).

The PPIase FKBP-type domain occupies 162–243 (GDFVSIDLSA…VGSIKERELP (82 aa)). The interval 433–490 (VDAVLGPRRGGADEAGAEAEAAEEKPAKAKKSADSEKTDKSEKAEKKSKKKSKDDDAE) is disordered. Residues 454 to 477 (AEEKPAKAKKSADSEKTDKSEKAE) are compositionally biased toward basic and acidic residues.

Belongs to the FKBP-type PPIase family. Tig subfamily.

It is found in the cytoplasm. The catalysed reaction is [protein]-peptidylproline (omega=180) = [protein]-peptidylproline (omega=0). In terms of biological role, involved in protein export. Acts as a chaperone by maintaining the newly synthesized protein in an open conformation. Functions as a peptidyl-prolyl cis-trans isomerase. The protein is Trigger factor of Mycobacteroides abscessus (strain ATCC 19977 / DSM 44196 / CCUG 20993 / CIP 104536 / JCM 13569 / NCTC 13031 / TMC 1543 / L948) (Mycobacterium abscessus).